A 1102-amino-acid chain; its full sequence is Phosphatidylinositol 4,5-bisphosphate 3-kinase catalytic subunit gamma isoform (1102 aa).

Residues 34 to 141 form the PI3K-ABD domain; the sequence is SMELIPIEFV…PGQIHVVQRH (108 aa). Residues 217–309 enclose the PI3K-RBD domain; it reads NNCVFIVIHR…GEEIHLVLDT (93 aa). The region spanning 357 to 521 is the C2 PI3K-type domain; it reads CDRKFRVKIR…NSMSISILLD (165 aa). One can recognise a PIK helical domain in the interval 541–723; it reads DRVRAEMPNQ…AVILEAYLRG (183 aa). Positions 797 to 1080 constitute a PI3K/PI4K catalytic domain; sequence VIEKCKVMAS…QIEVCRDKGW (284 aa). Positions 803–809 are G-loop; the sequence is VMASKKK. ATP-binding positions include 829-838 and 864-872; these read GIIFKHGDDL and LLPYGCIST. The segment at 943-951 is catalytic loop; it reads GIGDRHNDN. ATP is bound at residue 961–969; it reads FHIDFGHIL. The segment at 962-988 is activation loop; it reads HIDFGHILGNYKSFLGINKERVPFVLT. Residue Thr-1024 is modified to Phosphothreonine; by PKA. Phosphoserine; by autocatalysis is present on Ser-1101.

The protein belongs to the PI3/PI4-kinase family. As to quaternary structure, heterodimer of a catalytic subunit PIK3CG and a PIK3R5 or PIK3R6 regulatory subunit. Interacts with GRK2 through the PIK helical domain. Interaction with GRK2 is required for targeting to agonist-occupied receptor. Interacts with PDE3B; regulates PDE3B activity and thereby cAMP levels in cells. Interacts with TPM2. Interacts with EPHA8; regulates integrin-mediated cell adhesion to substrate. Interacts with HRAS; the interaction is required for membrane recruitment and beta-gamma G protein dimer-dependent activation of the PI3K gamma complex PIK3CG:PIK3R6. In terms of processing, autophosphorylation at Ser-1101 has no effect on the phosphatidylinositol-4,5-bisphosphate 3-kinase activity.

The protein resides in the cytoplasm. It localises to the cell membrane. The catalysed reaction is a 1,2-diacyl-sn-glycero-3-phospho-(1D-myo-inositol-4,5-bisphosphate) + ATP = a 1,2-diacyl-sn-glycero-3-phospho-(1D-myo-inositol-3,4,5-trisphosphate) + ADP + H(+). It carries out the reaction a 1,2-diacyl-sn-glycero-3-phospho-(1D-myo-inositol) + ATP = a 1,2-diacyl-sn-glycero-3-phospho-(1D-myo-inositol-3-phosphate) + ADP + H(+). The enzyme catalyses a 1,2-diacyl-sn-glycero-3-phospho-(1D-myo-inositol 4-phosphate) + ATP = a 1,2-diacyl-sn-glycero-3-phospho-(1D-myo-inositol-3,4-bisphosphate) + ADP + H(+). It catalyses the reaction L-seryl-[protein] + ATP = O-phospho-L-seryl-[protein] + ADP + H(+). It participates in phospholipid metabolism; phosphatidylinositol phosphate biosynthesis. With respect to regulation, activated by both the alpha and the beta-gamma G proteins following stimulation of G protein-coupled receptors (GPCRs). Activation by GPCRs is assisted by the regulatory subunits (PIK3R5 or PIK3R6) leading to the translocation from the cytosol to the plasma membrane and to kinase activation. When bound to PIK3R5 the PI3K activity of PIK3CG could be activated greater than 100-fold by the beta-gamma G proteins. In terms of biological role, phosphoinositide-3-kinase (PI3K) that phosphorylates PtdIns(4,5)P2 (Phosphatidylinositol 4,5-bisphosphate) to generate phosphatidylinositol 3,4,5-trisphosphate (PIP3). PIP3 plays a key role by recruiting PH domain-containing proteins to the membrane, including AKT1 and PDPK1, activating signaling cascades involved in cell growth, survival, proliferation, motility and morphology. Links G-protein coupled receptor activation to PIP3 production. Involved in immune, inflammatory and allergic responses. Modulates leukocyte chemotaxis to inflammatory sites and in response to chemoattractant agents. May control leukocyte polarization and migration by regulating the spatial accumulation of PIP3 and by regulating the organization of F-actin formation and integrin-based adhesion at the leading edge. Controls motility of dendritic cells. Participates in T-lymphocyte migration. Regulates T-lymphocyte proliferation and cytokine production. Required for B-lymphocyte development and signaling. Together with other PI3Ks are involved in the oxidative burst produced by neutrophils in response to chemotactic agents. Together with PIK3CD regulate neutrophil extravasation. Together with PIK3CB promotes platelet aggregation and thrombosis. Regulates alpha-IIb/beta-3 integrins (ITGA2B/ ITGB3) adhesive function in platelets downstream of P2Y12 through a lipid kinase activity-independent mechanism. May have also a lipid kinase activity-dependent function in platelet aggregation. Involved in endothelial progenitor cell migration. Negative regulator of cardiac contractility. Modulates cardiac contractility by anchoring protein kinase A (PKA) and PDE3B activation, reducing cAMP levels. Regulates cardiac contractility also by promoting beta-adrenergic receptor internalization by binding to GRK2 and by non-muscle tropomyosin phosphorylation. Also has serine/threonine protein kinase activity: both lipid and protein kinase activities are required for beta-adrenergic receptor endocytosis. May also have a scaffolding role in modulating cardiac contractility. Contribute to cardiac hypertrophy under pathological stress. Through simultaneous binding of PDE3B to RAPGEF3 and PIK3R6 is assembled in a signaling complex in which the PI3K gamma complex is activated by RAPGEF3 and which is involved in angiogenesis. In neutrophils, participates in a phospholipase C-activating N-formyl peptide-activated GPCR (G protein-coupled receptor) signaling pathway downstream of RASGRP4-mediated Ras-activation, to promote neutrophil functional responses. In Sus scrofa (Pig), this protein is Phosphatidylinositol 4,5-bisphosphate 3-kinase catalytic subunit gamma isoform (PIK3CG).